The chain runs to 64 residues: DNA gyrase inhibitor YacG (64 aa).

4 residues coordinate Zn(2+): C10, C13, C29, and C33.

Belongs to the DNA gyrase inhibitor YacG family. As to quaternary structure, interacts with GyrB. Zn(2+) serves as cofactor.

Its function is as follows. Inhibits all the catalytic activities of DNA gyrase by preventing its interaction with DNA. Acts by binding directly to the C-terminal domain of GyrB, which probably disrupts DNA binding by the gyrase. This is DNA gyrase inhibitor YacG from Pectobacterium carotovorum subsp. carotovorum (strain PC1).